The primary structure comprises 242 residues: HTH domain-truncated transcriptional regulator QseD (242 aa).

This sequence belongs to the LysR transcriptional regulatory family.

Functionally, represses EHEC virulence expression. Down-regulates expression of LEE (locus of enterocyte effacement) and iraD genes, and alters AE (attaching and effacing) lesion formation. May regulate transcription through interactions with another HTH DNA-binding protein. In Escherichia coli O157:H7, this protein is HTH domain-truncated transcriptional regulator QseD (qseD).